The primary structure comprises 459 residues: Bifunctional protein GlmU (459 aa).

Residues 1–229 (MTNYAIILAA…FDESLGVNDR (229 aa)) form a pyrophosphorylase region. Residues 8-11 (LAAG), Lys-22, Gln-72, and 77-78 (GT) each bind UDP-N-acetyl-alpha-D-glucosamine. Residue Asp-102 coordinates Mg(2+). Positions 139, 154, 169, and 227 each coordinate UDP-N-acetyl-alpha-D-glucosamine. Residue Asn-227 participates in Mg(2+) binding. Residues 230–250 (VALATAESVMRRRINQKHMVN) form a linker region. An N-acetyltransferase region spans residues 251–459 (GVSFVNPDAT…KRLPHHPQNK (209 aa)). Positions 332 and 350 each coordinate UDP-N-acetyl-alpha-D-glucosamine. The Proton acceptor role is filled by His-362. Positions 365 and 376 each coordinate UDP-N-acetyl-alpha-D-glucosamine. Residues Ala-379, 385–386 (NY), Ser-404, Ala-422, and Arg-439 each bind acetyl-CoA.

This sequence in the N-terminal section; belongs to the N-acetylglucosamine-1-phosphate uridyltransferase family. It in the C-terminal section; belongs to the transferase hexapeptide repeat family. As to quaternary structure, homotrimer. Mg(2+) is required as a cofactor.

The protein resides in the cytoplasm. It catalyses the reaction alpha-D-glucosamine 1-phosphate + acetyl-CoA = N-acetyl-alpha-D-glucosamine 1-phosphate + CoA + H(+). The enzyme catalyses N-acetyl-alpha-D-glucosamine 1-phosphate + UTP + H(+) = UDP-N-acetyl-alpha-D-glucosamine + diphosphate. The protein operates within nucleotide-sugar biosynthesis; UDP-N-acetyl-alpha-D-glucosamine biosynthesis; N-acetyl-alpha-D-glucosamine 1-phosphate from alpha-D-glucosamine 6-phosphate (route II): step 2/2. It functions in the pathway nucleotide-sugar biosynthesis; UDP-N-acetyl-alpha-D-glucosamine biosynthesis; UDP-N-acetyl-alpha-D-glucosamine from N-acetyl-alpha-D-glucosamine 1-phosphate: step 1/1. Its pathway is bacterial outer membrane biogenesis; LPS lipid A biosynthesis. Its function is as follows. Catalyzes the last two sequential reactions in the de novo biosynthetic pathway for UDP-N-acetylglucosamine (UDP-GlcNAc). The C-terminal domain catalyzes the transfer of acetyl group from acetyl coenzyme A to glucosamine-1-phosphate (GlcN-1-P) to produce N-acetylglucosamine-1-phosphate (GlcNAc-1-P), which is converted into UDP-GlcNAc by the transfer of uridine 5-monophosphate (from uridine 5-triphosphate), a reaction catalyzed by the N-terminal domain. The polypeptide is Bifunctional protein GlmU (Streptococcus gordonii (strain Challis / ATCC 35105 / BCRC 15272 / CH1 / DL1 / V288)).